We begin with the raw amino-acid sequence, 123 residues long: MEYSTFGKHIIVDLWGVDFSLLDDMYFLEHHLVHAADLSGAHVLNVSTKEFDPHGVTVLVLLSESHLSIHTYPEKNFAAIDCYTCGTTVEPQIAIDYIVSILKPNEMHIKKLIRGIGEIVNTD.

The active-site Schiff-base intermediate with substrate; via pyruvic acid is S65. Residue S65 is modified to Pyruvic acid (Ser); by autocatalysis. Residue H70 is the Proton acceptor; for processing activity of the active site. C85 (proton donor; for catalytic activity) is an active-site residue.

The protein belongs to the prokaryotic AdoMetDC family. Type 1 subfamily. As to quaternary structure, heterotetramer of two alpha and two beta chains arranged as a dimer of alpha/beta heterodimers. Requires pyruvate as cofactor. In terms of processing, is synthesized initially as an inactive proenzyme. Formation of the active enzyme involves a self-maturation process in which the active site pyruvoyl group is generated from an internal serine residue via an autocatalytic post-translational modification. Two non-identical subunits are generated from the proenzyme in this reaction, and the pyruvate is formed at the N-terminus of the alpha chain, which is derived from the carboxyl end of the proenzyme. The post-translation cleavage follows an unusual pathway, termed non-hydrolytic serinolysis, in which the side chain hydroxyl group of the serine supplies its oxygen atom to form the C-terminus of the beta chain, while the remainder of the serine residue undergoes an oxidative deamination to produce ammonia and the pyruvoyl group blocking the N-terminus of the alpha chain.

It carries out the reaction S-adenosyl-L-methionine + H(+) = S-adenosyl 3-(methylsulfanyl)propylamine + CO2. The protein operates within amine and polyamine biosynthesis; S-adenosylmethioninamine biosynthesis; S-adenosylmethioninamine from S-adenosyl-L-methionine: step 1/1. In terms of biological role, catalyzes the decarboxylation of S-adenosylmethionine to S-adenosylmethioninamine (dcAdoMet), the propylamine donor required for the synthesis of the polyamines spermine and spermidine from the diamine putrescine. This chain is S-adenosylmethionine decarboxylase proenzyme 2, found in Bacillus cereus (strain ZK / E33L).